Here is a 208-residue protein sequence, read N- to C-terminus: Outer-membrane lipoprotein carrier protein (208 aa).

The first 21 residues, 1–21 (MRLIRTLFVAALAMGTSLAHA), serve as a signal peptide directing secretion.

Belongs to the LolA family. Monomer.

It localises to the periplasm. In terms of biological role, participates in the translocation of lipoproteins from the inner membrane to the outer membrane. Only forms a complex with a lipoprotein if the residue after the N-terminal Cys is not an aspartate (The Asp acts as a targeting signal to indicate that the lipoprotein should stay in the inner membrane). In Pseudomonas paraeruginosa (strain DSM 24068 / PA7) (Pseudomonas aeruginosa (strain PA7)), this protein is Outer-membrane lipoprotein carrier protein.